The following is a 406-amino-acid chain: WD repeat and SOCS box-containing protein 2 (406 aa).

Residues 70 to 89 are disordered; it reads AKSRSSKNETKGRGSPKEKT. 5 WD repeats span residues 107–150, 153–193, 197–236, 239–278, and 293–332; these read PPSK…LLLN, GHQD…KQIQ, GHLQ…LIRK, GHQS…RLRS, and VHIS…PIAF. Residues 358–406 enclose the SOCS box domain; the sequence is HVQFWTAPRVLSSLKHLCRKALRSFLTTYQVLALPIPKKMKEFLTYRTF.

It functions in the pathway protein modification; protein ubiquitination. Its function is as follows. May be a substrate-recognition component of a SCF-like ECS (Elongin-Cullin-SOCS-box protein) E3 ubiquitin ligase complex which mediates the ubiquitination and subsequent proteasomal degradation of target proteins. This Bos taurus (Bovine) protein is WD repeat and SOCS box-containing protein 2 (WSB2).